We begin with the raw amino-acid sequence, 228 residues long: Large ribosomal subunit protein bL25 (228 aa).

The tract at residues Glu196–Ala228 is disordered. Positions Ala209–Ala228 are enriched in basic and acidic residues.

It belongs to the bacterial ribosomal protein bL25 family. CTC subfamily. Part of the 50S ribosomal subunit; part of the 5S rRNA/L5/L18/L25 subcomplex. Contacts the 5S rRNA. Binds to the 5S rRNA independently of L5 and L18.

Its function is as follows. This is one of the proteins that binds to the 5S RNA in the ribosome where it forms part of the central protuberance. The chain is Large ribosomal subunit protein bL25 from Methylorubrum extorquens (strain CM4 / NCIMB 13688) (Methylobacterium extorquens).